The primary structure comprises 700 residues: Non-hemolytic phospholipase C (700 aa).

Positions 1-34 (MTNQNRRDFLRLAAGTAGAAALQLFPPVIREALA) form a signal peptide, tat-type signal.

It belongs to the bacterial phospholipase C family. In terms of processing, predicted to be exported by the Tat system. The position of the signal peptide cleavage has not been experimentally proven.

The enzyme catalyses a 1,2-diacyl-sn-glycero-3-phosphocholine + H2O = phosphocholine + a 1,2-diacyl-sn-glycerol + H(+). In terms of biological role, hydrolyzes phosphatidylserine as well as phosphatidylcholine. In Burkholderia pseudomallei (strain K96243), this protein is Non-hemolytic phospholipase C (plcN).